The primary structure comprises 1680 residues: SWI/SNF chromatin-remodeling complex subunit snf22 (1680 aa).

Disordered regions lie at residues Q61–S135, N203–S258, R274–Y300, and Y367–T427. A compositionally biased stretch (polar residues) spans Q62–N91. 2 stretches are compositionally biased toward low complexity: residues G118–P127 and S222–S233. The span at T234–A245 shows a compositional bias: polar residues. Composition is skewed to low complexity over residues S247–S258, P282–P299, and P374–P392. Positions P406 to V419 are enriched in polar residues. A QLQ domain is found at K429–G465. The span at S477–S489 shows a compositional bias: polar residues. The interval S477–A499 is disordered. Positions V490 to A499 are enriched in basic and acidic residues. The HSA domain occupies Q704–A776. Over residues S817 to A832 the composition is skewed to polar residues. The interval S817–A836 is disordered. In terms of domain architecture, Helicase ATP-binding spans L881–K1046. D894–T901 lines the ATP pocket. The short motif at D996–H999 is the DEGH box element. Residues L1191–L1354 enclose the Helicase C-terminal domain. The interval T1466–P1511 is disordered. Residues P1476–T1486 are compositionally biased toward basic residues. A compositionally biased stretch (low complexity) spans S1488–L1502. The region spanning Y1513–L1623 is the Bromo domain.

The protein belongs to the SNF2/RAD54 helicase family. In terms of assembly, component of the SWI/SNF global transcription activator complex composed of at least arp9, arp42, snf5, snf22, snf30, sbf59, sol1, ssr1, ssr2, ssr3, ssr4 and tfg3.

It is found in the nucleus. Helicase. Component of the SWI/SNF complex, an ATP-dependent chromatin remodeling complex, required for the positive and negative regulation of gene expression of a large number of genes. It changes chromatin structure by altering DNA-histone contacts within a nucleosome, leading eventually to a change in nucleosome position, thus facilitating or repressing binding of gene-specific transcription factors. The protein is SWI/SNF chromatin-remodeling complex subunit snf22 (snf22) of Schizosaccharomyces pombe (strain 972 / ATCC 24843) (Fission yeast).